Consider the following 161-residue polypeptide: D-amino-acid N-acetyltransferase HPA3 (161 aa).

Serine 2 carries the post-translational modification N-acetylserine. Positions 14–161 (IVVKAIEPKD…DKVLYKRNGY (148 aa)) constitute an N-acetyltransferase domain. An acetyl-CoA-binding site is contributed by 98–111 (LYVTERARVKGVGR).

Belongs to the acetyltransferase family. GNAT subfamily. In terms of processing, autoacetylates in an intermolecular reaction.

The protein resides in the cytoplasm. The protein localises to the nucleus. The enzyme catalyses a D-alpha-amino acid + acetyl-CoA = an N-acetyl-D-amino acid + CoA + H(+). N-acetyltransferase that acts on a wide range of D-amino acids. Catalyzes the N-acetylation through an ordered bi-bi mechanism, in which acetyl-CoA is the first substrate to be bound and CoA is the last product to be liberated. D-amino acids are toxic for the cell and their N-acetylation, preceding removal from cells, plays an important role in detoxification of D-amino acids. In vitro, capable of acetylating histone H4 at 'Lys-8' and polyamines like putrescine, spermidine and spermine. In Saccharomyces cerevisiae (strain ATCC 204508 / S288c) (Baker's yeast), this protein is D-amino-acid N-acetyltransferase HPA3.